Reading from the N-terminus, the 544-residue chain is Chaperonin GroEL 2 (544 aa).

ATP contacts are provided by residues 29-32 (TLGP), 86-90 (DGTTT), Gly413, 479-481 (NAA), and Asp495.

It belongs to the chaperonin (HSP60) family. Forms a cylinder of 14 subunits composed of two heptameric rings stacked back-to-back. Interacts with the co-chaperonin GroES.

The protein resides in the cytoplasm. The catalysed reaction is ATP + H2O + a folded polypeptide = ADP + phosphate + an unfolded polypeptide.. In terms of biological role, together with its co-chaperonin GroES, plays an essential role in assisting protein folding. The GroEL-GroES system forms a nano-cage that allows encapsulation of the non-native substrate proteins and provides a physical environment optimized to promote and accelerate protein folding. The chain is Chaperonin GroEL 2 from Prochlorococcus marinus subsp. pastoris (strain CCMP1986 / NIES-2087 / MED4).